The sequence spans 353 residues: GTPase Obg (353 aa).

The 159-residue stretch at 1–159 (MKFLDEAKVY…RWIWLRLKLI (159 aa)) folds into the Obg domain. Residues 160-327 (ADAGLVGLPN…ALRALAAVIG (168 aa)) form the OBG-type G domain. Residues 166–173 (GLPNAGKS), 191–195 (FTTLH), 212–215 (DIPG), 279–282 (NKID), and 308–310 (SGV) contribute to the GTP site. 2 residues coordinate Mg(2+): Ser173 and Thr193.

The protein belongs to the TRAFAC class OBG-HflX-like GTPase superfamily. OBG GTPase family. As to quaternary structure, monomer. Mg(2+) serves as cofactor.

It is found in the cytoplasm. Functionally, an essential GTPase which binds GTP, GDP and possibly (p)ppGpp with moderate affinity, with high nucleotide exchange rates and a fairly low GTP hydrolysis rate. Plays a role in control of the cell cycle, stress response, ribosome biogenesis and in those bacteria that undergo differentiation, in morphogenesis control. The polypeptide is GTPase Obg (Rhodopseudomonas palustris (strain BisB5)).